A 148-amino-acid chain; its full sequence is Antitoxin Xre (148 aa).

It belongs to the MbcA/ParS/Xre antitoxin family. In terms of assembly, homodimer. Forms a complex with cognate toxin Rse.

Functionally, antitoxin component of a type II toxin-antitoxin (TA) system. Neutralizes the NAD(+) depleting activity of cognate toxin Res. This is Antitoxin Xre from Photorhabdus laumondii subsp. laumondii (strain DSM 15139 / CIP 105565 / TT01) (Photorhabdus luminescens subsp. laumondii).